A 198-amino-acid polypeptide reads, in one-letter code: Holliday junction branch migration complex subunit RuvA (198 aa).

Residues 1 to 63 (MIAYLSGAVR…EDAQLLFGFL (63 aa)) form a domain I region. Residues 64 to 142 (DTDSLRLFDL…EHLAAGAPVS (79 aa)) form a domain II region. The interval 143-150 (AGKAALTS) is flexible linker. Residues 150 to 198 (STAGRDAIEALLALGFREPQVRSVVAELLAADPEQSADALIRKGLGKLR) are domain III.

Belongs to the RuvA family. In terms of assembly, homotetramer. Forms an RuvA(8)-RuvB(12)-Holliday junction (HJ) complex. HJ DNA is sandwiched between 2 RuvA tetramers; dsDNA enters through RuvA and exits via RuvB. An RuvB hexamer assembles on each DNA strand where it exits the tetramer. Each RuvB hexamer is contacted by two RuvA subunits (via domain III) on 2 adjacent RuvB subunits; this complex drives branch migration. In the full resolvosome a probable DNA-RuvA(4)-RuvB(12)-RuvC(2) complex forms which resolves the HJ.

It is found in the cytoplasm. Functionally, the RuvA-RuvB-RuvC complex processes Holliday junction (HJ) DNA during genetic recombination and DNA repair, while the RuvA-RuvB complex plays an important role in the rescue of blocked DNA replication forks via replication fork reversal (RFR). RuvA specifically binds to HJ cruciform DNA, conferring on it an open structure. The RuvB hexamer acts as an ATP-dependent pump, pulling dsDNA into and through the RuvAB complex. HJ branch migration allows RuvC to scan DNA until it finds its consensus sequence, where it cleaves and resolves the cruciform DNA. This chain is Holliday junction branch migration complex subunit RuvA, found in Deinococcus geothermalis (strain DSM 11300 / CIP 105573 / AG-3a).